We begin with the raw amino-acid sequence, 500 residues long: Cytochrome P450 monooxygenase 103 (500 aa).

Helical transmembrane passes span 1-21 and 26-46; these read MASTPLLYVLVIILSAVYLLR and PLYAIPAVGPSLPLLSYIGAL. N-linked (GlcNAc...) asparagine glycosylation is present at N374. C441 contacts heme.

The protein belongs to the cytochrome P450 family. It depends on heme as a cofactor.

The protein resides in the membrane. Its pathway is secondary metabolite biosynthesis. In terms of biological role, cytochrome P450 monooxygenase that is able to use testosterone as a substrate for oxidation. The chain is Cytochrome P450 monooxygenase 103 from Postia placenta (strain ATCC 44394 / Madison 698-R) (Brown rot fungus).